Here is a 334-residue protein sequence, read N- to C-terminus: Protein-glutamate methylesterase/protein-glutamine glutaminase 2 (334 aa).

The Response regulatory domain maps to 2-120 (NIGIVNDLPL…GAAGDTTKLL (119 aa)). At Asp-53 the chain carries 4-aspartylphosphate. Positions 134–334 (PGSSRLAGAA…AGELAALARI (201 aa)) constitute a CheB-type methylesterase domain. Catalysis depends on residues Ser-157, His-184, and Asp-277.

The protein belongs to the CheB family. Post-translationally, phosphorylated by CheA. Phosphorylation of the N-terminal regulatory domain activates the methylesterase activity.

It localises to the cytoplasm. The catalysed reaction is [protein]-L-glutamate 5-O-methyl ester + H2O = L-glutamyl-[protein] + methanol + H(+). It catalyses the reaction L-glutaminyl-[protein] + H2O = L-glutamyl-[protein] + NH4(+). Functionally, involved in chemotaxis. Part of a chemotaxis signal transduction system that modulates chemotaxis in response to various stimuli. Catalyzes the demethylation of specific methylglutamate residues introduced into the chemoreceptors (methyl-accepting chemotaxis proteins or MCP) by CheR. Also mediates the irreversible deamidation of specific glutamine residues to glutamic acid. The chain is Protein-glutamate methylesterase/protein-glutamine glutaminase 2 from Burkholderia orbicola (strain AU 1054).